Reading from the N-terminus, the 209-residue chain is Urease accessory protein UreG (209 aa).

Residue 14-21 (GPVGSGKT) participates in GTP binding.

The protein belongs to the SIMIBI class G3E GTPase family. UreG subfamily. Homodimer. UreD, UreF and UreG form a complex that acts as a GTP-hydrolysis-dependent molecular chaperone, activating the urease apoprotein by helping to assemble the nickel containing metallocenter of UreC. The UreE protein probably delivers the nickel.

The protein resides in the cytoplasm. In terms of biological role, facilitates the functional incorporation of the urease nickel metallocenter. This process requires GTP hydrolysis, probably effectuated by UreG. The chain is Urease accessory protein UreG from Rhodopseudomonas palustris (strain ATCC BAA-98 / CGA009).